A 192-amino-acid polypeptide reads, in one-letter code: E3 ubiquitin-protein ligase RNF183 (192 aa).

Topologically, residues 1 to 161 (MAEQQGRELE…RECFRNPQFR (161 aa)) are cytoplasmic. The segment at 13 to 60 (CPVCWNPFNNTFHTPKMLDCCHSFCVECLAHLSLVTPARRRLLCPLCR) adopts an RING-type zinc-finger fold. Residues 162–182 (IFAYLMAVILSVTLLLIFSIF) traverse the membrane as a helical; Anchor for type IV membrane protein segment. Topologically, residues 183-192 (WTKQFLWGVG) are lumenal.

In terms of assembly, interacts with FATE1. Interacts with SEC16A. Interacts with BCL2L1. Post-translationally, autoubiquitinated (in vitro). In terms of tissue distribution, kidney and testis.

It localises to the endoplasmic reticulum membrane. The protein localises to the endoplasmic reticulum. The protein resides in the golgi apparatus. Its subcellular location is the cis-Golgi network membrane. It is found in the lysosome membrane. It catalyses the reaction S-ubiquitinyl-[E2 ubiquitin-conjugating enzyme]-L-cysteine + [acceptor protein]-L-lysine = [E2 ubiquitin-conjugating enzyme]-L-cysteine + N(6)-ubiquitinyl-[acceptor protein]-L-lysine.. It participates in protein modification; protein ubiquitination. Acts as an E3 ubiquitin ligase catalyzing the covalent attachment of ubiquitin moieties onto substrate proteins. Triggers apoptosis in response to prolonged ER stress by mediating the polyubiquitination and subsequent proteasomal degradation of BCL2L1. May collaborate with FATE1 to restrain BIK protein levels thus regulating apoptotic signaling. In Homo sapiens (Human), this protein is E3 ubiquitin-protein ligase RNF183 (RNF183).